The primary structure comprises 310 residues: Small ribosomal subunit biogenesis GTPase RsgA 2 (310 aa).

A CP-type G domain is found at 77–238 (LSKQSHILAA…IIDTPGIKGF (162 aa)). Residues 126–129 (NKVD) and 180–188 (GHSGVGKST) contribute to the GTP site. The Zn(2+) site is built by Cys262, Cys267, His269, and Cys275.

It belongs to the TRAFAC class YlqF/YawG GTPase family. RsgA subfamily. In terms of assembly, monomer. Associates with 30S ribosomal subunit, binds 16S rRNA. Requires Zn(2+) as cofactor.

It is found in the cytoplasm. One of several proteins that assist in the late maturation steps of the functional core of the 30S ribosomal subunit. Helps release RbfA from mature subunits. May play a role in the assembly of ribosomal proteins into the subunit. Circularly permuted GTPase that catalyzes slow GTP hydrolysis, GTPase activity is stimulated by the 30S ribosomal subunit. The chain is Small ribosomal subunit biogenesis GTPase RsgA 2 from Bacteroides thetaiotaomicron (strain ATCC 29148 / DSM 2079 / JCM 5827 / CCUG 10774 / NCTC 10582 / VPI-5482 / E50).